Consider the following 246-residue polypeptide: 3-oxoacyl-[acyl-carrier-protein] reductase FabG (246 aa).

NADP(+) contacts are provided by residues 11 to 14 (GASR), Ser36, 62 to 63 (DV), and Asn89. Substrate is bound at residue Ser141. Tyr154 (proton acceptor) is an active-site residue. Residues 154 to 158 (YVAAK) and Ile187 each bind NADP(+).

It belongs to the short-chain dehydrogenases/reductases (SDR) family. In terms of assembly, homotetramer.

It catalyses the reaction a (3R)-hydroxyacyl-[ACP] + NADP(+) = a 3-oxoacyl-[ACP] + NADPH + H(+). It functions in the pathway lipid metabolism; fatty acid biosynthesis. Functionally, catalyzes the NADPH-dependent reduction of beta-ketoacyl-ACP substrates to beta-hydroxyacyl-ACP products, the first reductive step in the elongation cycle of fatty acid biosynthesis. This chain is 3-oxoacyl-[acyl-carrier-protein] reductase FabG (fabG), found in Bacillus subtilis (strain 168).